The chain runs to 348 residues: DnaJ homolog subfamily B member 5 (348 aa).

The region spanning 4–68 (DYYKILGIPS…KKRGLYDQYG (65 aa)) is the J domain.

This chain is DnaJ homolog subfamily B member 5 (DNAJB5), found in Homo sapiens (Human).